The chain runs to 594 residues: Fidgetin-like protein 1 (594 aa).

Disordered stretches follow at residues 1–79 (MYSP…DDEL) and 239–261 (QSIGSLAGIPPARRAPDIPKRCS). Residues 56–73 (PSDSAQQQPPFKSRSQQN) are compositionally biased toward polar residues. ATP is bound by residues Ala-319 and 359–364 (GTGKTM).

Belongs to the AAA ATPase family. As to quaternary structure, hexamer. Mg(2+) is required as a cofactor. In terms of tissue distribution, expressed in germ cells.

It is found in the nucleus. It carries out the reaction ATP + H2O = ADP + phosphate + H(+). Functionally, has a role in spindle assembly which acts in the progression through mitosis during embryogenesis. Required for fertility. This chain is Fidgetin-like protein 1 (figl-1), found in Caenorhabditis elegans.